The following is a 210-amino-acid chain: N-(5'-phosphoribosyl)anthranilate isomerase (210 aa).

This sequence belongs to the TrpF family.

It catalyses the reaction N-(5-phospho-beta-D-ribosyl)anthranilate = 1-(2-carboxyphenylamino)-1-deoxy-D-ribulose 5-phosphate. Its pathway is amino-acid biosynthesis; L-tryptophan biosynthesis; L-tryptophan from chorismate: step 3/5. The sequence is that of N-(5'-phosphoribosyl)anthranilate isomerase from Nostoc punctiforme (strain ATCC 29133 / PCC 73102).